A 206-amino-acid polypeptide reads, in one-letter code: Small ribosomal subunit protein uS4 (206 aa).

Positions M15–S46 are disordered. Residues R94–T157 enclose the S4 RNA-binding domain.

It belongs to the universal ribosomal protein uS4 family. Part of the 30S ribosomal subunit. Contacts protein S5. The interaction surface between S4 and S5 is involved in control of translational fidelity.

In terms of biological role, one of the primary rRNA binding proteins, it binds directly to 16S rRNA where it nucleates assembly of the body of the 30S subunit. With S5 and S12 plays an important role in translational accuracy. The sequence is that of Small ribosomal subunit protein uS4 from Cereibacter sphaeroides (strain ATCC 17025 / ATH 2.4.3) (Rhodobacter sphaeroides).